Consider the following 188-residue polypeptide: dTTP/UTP pyrophosphatase (188 aa).

Aspartate 67 functions as the Proton acceptor in the catalytic mechanism.

It belongs to the Maf family. YhdE subfamily. A divalent metal cation is required as a cofactor.

The protein resides in the cytoplasm. It catalyses the reaction dTTP + H2O = dTMP + diphosphate + H(+). The catalysed reaction is UTP + H2O = UMP + diphosphate + H(+). Its function is as follows. Nucleoside triphosphate pyrophosphatase that hydrolyzes dTTP and UTP. May have a dual role in cell division arrest and in preventing the incorporation of modified nucleotides into cellular nucleic acids. This chain is dTTP/UTP pyrophosphatase, found in Thermococcus kodakarensis (strain ATCC BAA-918 / JCM 12380 / KOD1) (Pyrococcus kodakaraensis (strain KOD1)).